A 334-amino-acid polypeptide reads, in one-letter code: D-fructose 1,6-bisphosphatase class 2/sedoheptulose 1,7-bisphosphatase (334 aa).

Mn(2+) is bound by residues aspartate 33, glutamate 57, aspartate 85, and glutamate 88. Residues 88–90, tyrosine 119, 164–166, and 186–188 each bind substrate; these read EGT, RAR, and DGD. Glutamate 213 contributes to the Mn(2+) binding site.

It belongs to the FBPase class 2 family. As to quaternary structure, homotetramer. Requires Mn(2+) as cofactor.

The catalysed reaction is beta-D-fructose 1,6-bisphosphate + H2O = beta-D-fructose 6-phosphate + phosphate. The enzyme catalyses D-sedoheptulose 1,7-bisphosphate + H2O = D-sedoheptulose 7-phosphate + phosphate. It functions in the pathway carbohydrate biosynthesis; Calvin cycle. In terms of biological role, catalyzes the hydrolysis of fructose 1,6-bisphosphate (Fru 1,6-P2) and sedoheptulose 1,7-bisphosphate (Sed 1,7-P2) to fructose 6-phosphate and sedoheptulose 7-phosphate, respectively. This Prochlorococcus marinus (strain NATL1A) protein is D-fructose 1,6-bisphosphatase class 2/sedoheptulose 1,7-bisphosphatase.